We begin with the raw amino-acid sequence, 219 residues long: ATP-dependent dethiobiotin synthetase BioD (219 aa).

Residue 12 to 17 (GVGKTI) participates in ATP binding. Residue threonine 16 coordinates Mg(2+). Residue lysine 32 is part of the active site. Residues aspartate 43 and 96–99 (ETSG) each bind ATP. 2 residues coordinate Mg(2+): aspartate 43 and glutamate 96.

The protein belongs to the dethiobiotin synthetase family. As to quaternary structure, homodimer. The cofactor is Mg(2+).

The protein resides in the cytoplasm. It carries out the reaction (7R,8S)-7,8-diammoniononanoate + CO2 + ATP = (4R,5S)-dethiobiotin + ADP + phosphate + 3 H(+). It functions in the pathway cofactor biosynthesis; biotin biosynthesis; biotin from 7,8-diaminononanoate: step 1/2. In terms of biological role, catalyzes a mechanistically unusual reaction, the ATP-dependent insertion of CO2 between the N7 and N8 nitrogen atoms of 7,8-diaminopelargonic acid (DAPA, also called 7,8-diammoniononanoate) to form a ureido ring. In Chlamydia pneumoniae (Chlamydophila pneumoniae), this protein is ATP-dependent dethiobiotin synthetase BioD.